The chain runs to 221 residues: PKHD-type hydroxylase P9515_13321 (221 aa).

Residues 80 to 174 form the Fe2OG dioxygenase domain; it reads TIHGIMFTKS…RLVCVGWIES (95 aa). 3 residues coordinate Fe cation: His-98, Asp-100, and His-155. A 2-oxoglutarate-binding site is contributed by Arg-165.

The cofactor is Fe(2+). Requires L-ascorbate as cofactor.

This chain is PKHD-type hydroxylase P9515_13321, found in Prochlorococcus marinus (strain MIT 9515).